The chain runs to 331 residues: L-lactate dehydrogenase A chain (331 aa).

NAD(+) is bound by residues 29–57 (GMVGMASAISILLKDLCDELAMVDVMEDK) and Arg98. Substrate is bound by residues Arg105, Asn137, and Arg168. Asn137 is an NAD(+) binding site. The Proton acceptor role is filled by His192. Thr247 is a binding site for substrate.

It belongs to the LDH/MDH superfamily. LDH family. As to quaternary structure, homotetramer.

The protein resides in the cytoplasm. It carries out the reaction (S)-lactate + NAD(+) = pyruvate + NADH + H(+). Its pathway is fermentation; pyruvate fermentation to lactate; (S)-lactate from pyruvate: step 1/1. Its function is as follows. Interconverts simultaneously and stereospecifically pyruvate and lactate with concomitant interconversion of NADH and NAD(+). The protein is L-lactate dehydrogenase A chain (ldha) of Dissostichus mawsoni (Antarctic cod).